The sequence spans 205 residues: Probable DNA-binding protein (205 aa).

The disordered stretch occupies residues 140–168 (GEGDGAPRPACPDFSTRGAETGNQGVQPG).

This is Probable DNA-binding protein from Homo sapiens (Human).